Reading from the N-terminus, the 438-residue chain is Aflatoxin cluster transcriptional coactivator aflS (438 aa).

Residues Leu65–Val134 form the HTH iclR-type domain. A DNA-binding region (H-T-H motif) is located at residues Phe95–Arg114.

In terms of assembly, interacts with aflR.

It is found in the nucleus. Transcription factor; part of the gene cluster that mediates the biosynthesis of aflatoxin, a polyketide-derived furanocoumarin which is part of the most toxic and carcinogenic compounds among the known mycotoxins. AflS exhibits no DNA-binding capability on its own, but forms a complex with the other aflatoxin cluster transcription factor aflR and acts as a modulator of aflR's DNA-binding by decreasing its DNA-binding affinity. The chain is Aflatoxin cluster transcriptional coactivator aflS from Aspergillus flavus (strain ATCC 200026 / FGSC A1120 / IAM 13836 / NRRL 3357 / JCM 12722 / SRRC 167).